We begin with the raw amino-acid sequence, 359 residues long: Photosystem II protein D1 2 (359 aa).

3 consecutive transmembrane segments (helical) span residues 29-46, 118-133, and 142-156; these read YVGWFGVLMIPTLLAATT, HFLIGIYAYMGREWEL, and WICVAYSAPVAAASA. H118 contacts chlorophyll a. Y126 provides a ligand contact to pheophytin a. [CaMn4O5] cluster contacts are provided by D170 and E189. Residues 197 to 218 form a helical membrane-spanning segment; sequence FHMLGVAGVFGGSLFSAMHGSL. H198 contacts chlorophyll a. A quinone contacts are provided by residues H215 and 264 to 265; that span reads SF. H215 contacts Fe cation. Position 272 (H272) interacts with Fe cation. The chain crosses the membrane as a helical span at residues 274-288; it reads FLAAWPVVGIWFTAL. H332, E333, D342, and A344 together coordinate [CaMn4O5] cluster. The propeptide occupies 345–359; it reads AAESTPVALQAPAIG.

Belongs to the reaction center PufL/M/PsbA/D family. PSII is composed of 1 copy each of membrane proteins PsbA, PsbB, PsbC, PsbD, PsbE, PsbF, PsbH, PsbI, PsbJ, PsbK, PsbL, PsbM, PsbT, PsbX, PsbY, PsbZ, Psb30/Ycf12, peripheral proteins PsbO, CyanoQ (PsbQ), PsbU, PsbV and a large number of cofactors. It forms dimeric complexes. Requires The D1/D2 heterodimer binds P680, chlorophylls that are the primary electron donor of PSII, and subsequent electron acceptors. It shares a non-heme iron and each subunit binds pheophytin, quinone, additional chlorophylls, carotenoids and lipids. D1 provides most of the ligands for the Mn4-Ca-O5 cluster of the oxygen-evolving complex (OEC). There is also a Cl(-1) ion associated with D1 and D2, which is required for oxygen evolution. The PSII complex binds additional chlorophylls, carotenoids and specific lipids. as cofactor. Post-translationally, tyr-161 forms a radical intermediate that is referred to as redox-active TyrZ, YZ or Y-Z. C-terminally processed by CtpA; processing is essential to allow assembly of the oxygen-evolving complex and thus photosynthetic growth.

The protein resides in the cellular thylakoid membrane. The catalysed reaction is 2 a plastoquinone + 4 hnu + 2 H2O = 2 a plastoquinol + O2. Photosystem II (PSII) is a light-driven water:plastoquinone oxidoreductase that uses light energy to abstract electrons from H(2)O, generating O(2) and a proton gradient subsequently used for ATP formation. It consists of a core antenna complex that captures photons, and an electron transfer chain that converts photonic excitation into a charge separation. The D1/D2 (PsbA/PsbD) reaction center heterodimer binds P680, the primary electron donor of PSII as well as several subsequent electron acceptors. The protein is Photosystem II protein D1 2 of Synechococcus sp. (strain CC9311).